The chain runs to 197 residues: MKTKNRPPRRRTPMQDTEATPGEQTPDRPQSGSGGSELTKGLRSRTARASGGRGEVSRRRQGSGGRRENSVQRRLESNERERQRMHKLNNAFQALREVIPHVRADKKLSKIETLTLAKNYIKSLTATILTMSSSRLPGLEAPGPAPGPKLYQHYHHQQQQQQQQQQVAGAMLGVTEDQPQGHLQRYSTQIHSFREGS.

The segment covering 1–12 (MKTKNRPPRRRT) has biased composition (basic residues). Disordered stretches follow at residues 1–82 (MKTK…ERER) and 178–197 (QPQG…REGS). 2 positions are modified to phosphothreonine: Thr12 and Thr25. A compositionally biased stretch (basic and acidic residues) spans 65 to 82 (GRRENSVQRRLESNERER). The bHLH domain occupies 72–124 (QRRLESNERERQRMHKLNNAFQALREVIPHVRADKKLSKIETLTLAKNYIKSL).

In terms of assembly, forms homodimers or heterodimers with TCF3 gene products E12 and E47. These dimers bind to the E-box site, however, heterodimer with MYOD1 does not bind target DNA. Expressed in pancreatic tissue only in acinar cells. There is a complete absence of expression in intra- or interlobular pancreatic ducts and in all islet cells.

It is found in the nucleus. In terms of biological role, plays a role in controlling the transcriptional activity of MyoD, ensuring that expanding myoblast populations remain undifferentiated. Repression may occur through muscle-specific E-box occupancy by homodimers. May also negatively regulate bHLH-mediated transcription through an N-terminal repressor domain. Serves as a key regulator of acinar cell function, stability, and identity. Also required for normal organelle localization in exocrine cells and for mitochondrial calcium ion transport. May function as a unique regulator of gene expression in several different embryonic and postnatal cell lineages. Binds to the E-box consensus sequence 5'-CANNTG-3'. The protein is Class A basic helix-loop-helix protein 15 (Bhlha15) of Mus musculus (Mouse).